A 501-amino-acid chain; its full sequence is Aldehyde dehydrogenase, cytosolic 1 (501 aa).

246–251 (GSTEVG) serves as a coordination point for NAD(+). E269 functions as the Proton acceptor in the catalytic mechanism. Catalysis depends on C303, which acts as the Nucleophile.

The protein belongs to the aldehyde dehydrogenase family. In terms of assembly, homotetramer. As to expression, eye specific, with very high expression in the lens.

It localises to the cytoplasm. The enzyme catalyses an aldehyde + NAD(+) + H2O = a carboxylate + NADH + 2 H(+). It participates in alcohol metabolism; ethanol degradation; acetate from ethanol: step 2/2. In terms of biological role, major component of the eye of elephant shrews, which in contrast to other mammals, possesses both a lens- and a non-lens class-1 aldehyde dehydrogenase 1. This eye-specific form is a structural protein of the lens and, in other part of the eye, serves as the major form of ALDH1. Can convert/oxidize retinaldehyde to retinoic acid. This Macroscelides proboscideus (Short-eared elephant shrew) protein is Aldehyde dehydrogenase, cytosolic 1 (ALDH1).